We begin with the raw amino-acid sequence, 550 residues long: MGGNLGCHRSIPKDPTDFCQGKRKFSAACNFSNILVNQERLNINTATEEELMTLPGVNRGVAQNIVEYRDCIGGFKKVEDLALVSGVGATKLEAIKLEICVSSKNSSSNHSPSSLRKEHEHLPCTGVNINTATPPQLMSVRGITEKIAKNIVEFRSVHGPFKSIEDLVKVANINSSLLDRIRFQVFVERSRTPSTNTNGGFTHPSPTSFSVQSDEPDVPLGGPPLVTSVRPCVEPPAGTRDGKPVVRVATWNLQRCSSEKANNPGVKEVVCMTLLENDIKLLAVQDLADREALDKFCAELNQPTLCSVRRWKSARGLWKCAVSEKPNGVSNSAPEFSGFLWDCSSGIEMKDSAVLESFTTNGNGNPHPQPYLGHFYIGSSELTLVNVLLTAAPSPTENKRKSTSDDLKTHKLSSGVQETLKGERDLLVMGHFGVAPDSSEMEILRKEKLSALLAPSVFTNISTRTPQGSRSLDNIWASRSLRKTYTGQCSVVREGLTNPWIPDNWSWGGVASEHCPVVAEFFLDVLKERLCSGPAMPVVERGDSMSKHER.

The region spanning 39–68 is the HhH domain; that stretch reads ERLNINTATEEELMTLPGVNRGVAQNIVEY. Polar residues predominate over residues 194–213; the sequence is STNTNGGFTHPSPTSFSVQS. Positions 194-216 are disordered; it reads STNTNGGFTHPSPTSFSVQSDEP.

The chain is Endonuclease/exonuclease/phosphatase family domain-containing protein 1 (eepd1) from Danio rerio (Zebrafish).